Consider the following 477-residue polypeptide: PTS system glucose-specific EIICB component (477 aa).

The PTS EIIC type-1 domain maps to 1-388; the sequence is MFKNVFANLQ…FNLDTPGREN (388 aa). The next 10 helical transmembrane spans lie at 15–35, 51–71, 76–96, 112–132, 152–172, 191–211, 250–270, 280–300, 304–324, and 357–377; these read SLML…IGSA, TGGS…ALGF, GVAA…LTAV, HLSD…AYMF, FVPI…SLIW, PILA…FGLH, LSGG…AIWH, IGSI…TEPI, FIIV…LSFP, and FPII…LFII. Residues 399–477 enclose the PTS EIIB type-1 domain; that stretch reads NEIAPYIITA…TAMDECIKNI (79 aa). The active-site Phosphocysteine intermediate; for EIIB activity is the Cys-421. Cys-421 is modified (phosphocysteine).

The protein resides in the cell inner membrane. The catalysed reaction is N(pros)-phospho-L-histidyl-[protein] + D-glucose(out) = D-glucose 6-phosphate(in) + L-histidyl-[protein]. In terms of biological role, the phosphoenolpyruvate-dependent sugar phosphotransferase system (sugar PTS), a major carbohydrate active transport system, catalyzes the phosphorylation of incoming sugar substrates concomitantly with their translocation across the cell membrane. The enzyme II complex composed of PtsG and Crr is involved in glucose transport. This is PTS system glucose-specific EIICB component (ptsG) from Buchnera aphidicola subsp. Acyrthosiphon pisum (strain APS) (Acyrthosiphon pisum symbiotic bacterium).